A 217-amino-acid chain; its full sequence is MNQSLLSPFGDAITRVEAALTALRAGQGVLVVDDEDRENEGDLIYSAEHLTQEQMALLIRECSGIVCLCLTDERVKQLELPPMVEDNSSQYGTAFTVSIEAKVGVTTGVSAADRVTTIKAAIADDAKPSDLARPGHVYPLRAQPGGVLTRRGHTEGTIDLMKLAGLKPAGVLCEVTNVNGTMARLPEIIAFGEQHKMPVLTIEDIVCYRKSLLEKAS.

Residues R37–E38, D42, R150–T154, and E174 each bind D-ribulose 5-phosphate. E38 contributes to the Mg(2+) binding site. A Mg(2+)-binding site is contributed by H153.

It belongs to the DHBP synthase family. As to quaternary structure, homodimer. Mg(2+) serves as cofactor. Requires Mn(2+) as cofactor.

The catalysed reaction is D-ribulose 5-phosphate = (2S)-2-hydroxy-3-oxobutyl phosphate + formate + H(+). It participates in cofactor biosynthesis; riboflavin biosynthesis; 2-hydroxy-3-oxobutyl phosphate from D-ribulose 5-phosphate: step 1/1. Functionally, catalyzes the conversion of D-ribulose 5-phosphate to formate and 3,4-dihydroxy-2-butanone 4-phosphate. The polypeptide is 3,4-dihydroxy-2-butanone 4-phosphate synthase (Shewanella loihica (strain ATCC BAA-1088 / PV-4)).